A 732-amino-acid polypeptide reads, in one-letter code: Acetophenone carboxylase gamma subunit (732 aa).

The protein belongs to the HyuA family. Acetophenone carboxylase consists of five subunits; a heterooctameric subcomplex of two alpha (Apc1), two beta (Apc2), two gamma (Apc3) and two delta (Apc4) subunits assembles with the epsilon (Apc5) subunit in an unknown stoichiometry. It depends on Mg(2+) as a cofactor. Mn(2+) is required as a cofactor.

Its subcellular location is the cytoplasm. The catalysed reaction is acetophenone + hydrogencarbonate + 2 ATP + H2O = 3-oxo-3-phenylpropanoate + 2 ADP + 2 phosphate + 2 H(+). Its activity is regulated as follows. Inhibited by zinc ions, carbamoylphosphate and beta,gamma-imido-ATP. Its function is as follows. Catalyzes the carboxylation of acetophenone to form 3-oxo-3-phenylpropanoate (benzoylacetate) in the anaerobic catabolism of ethylbenzene. Also carboxylates propiophenone at the same rate and 4-acetyl-pyridine at lower rates. In Aromatoleum aromaticum (strain DSM 19018 / LMG 30748 / EbN1) (Azoarcus sp. (strain EbN1)), this protein is Acetophenone carboxylase gamma subunit (apc3).